A 272-amino-acid polypeptide reads, in one-letter code: Energy-coupling factor transporter ATP-binding protein EcfA1 (272 aa).

An ABC transporter domain is found at 2–237 (IKVSDVCFSY…KNIIEKAKID (236 aa)). 37-44 (GHNGSGKS) serves as a coordination point for ATP.

Belongs to the ABC transporter superfamily. Energy-coupling factor EcfA family. In terms of assembly, forms a stable energy-coupling factor (ECF) transporter complex composed of 2 membrane-embedded substrate-binding proteins (S component), 2 ATP-binding proteins (A component) and 2 transmembrane proteins (T component).

It localises to the cell membrane. In terms of biological role, ATP-binding (A) component of a common energy-coupling factor (ECF) ABC-transporter complex. Unlike classic ABC transporters this ECF transporter provides the energy necessary to transport a number of different substrates. The polypeptide is Energy-coupling factor transporter ATP-binding protein EcfA1 (Mesomycoplasma hyopneumoniae (strain 7448) (Mycoplasma hyopneumoniae)).